Here is a 458-residue protein sequence, read N- to C-terminus: BPI fold-containing family B member 2 (458 aa).

Positions 1–20 are cleaved as a signal peptide; that stretch reads MAWASRLGLLLALLLPVVGA. Phosphothreonine; by FAM20C is present on Thr-52. Phosphoserine; by FAM20C is present on Ser-60. N-linked (GlcNAc...) asparagine glycosylation is found at Asn-96, Asn-151, Asn-293, and Asn-332. A disulfide bridge links Cys-137 with Cys-174.

Belongs to the BPI/LBP/Plunc superfamily. BPI/LBP family. Highly expressed in tonsils, especially in hypertrophic tonsils. Detected at very low levels in fetal liver.

The protein localises to the secreted. The polypeptide is BPI fold-containing family B member 2 (BPIFB2) (Homo sapiens (Human)).